The sequence spans 88 residues: Small ribosomal subunit protein bS20 (88 aa).

The segment at 1-27 (MANSKSAKKRALQSEKRRQHNASRRSM) is disordered.

Belongs to the bacterial ribosomal protein bS20 family.

Its function is as follows. Binds directly to 16S ribosomal RNA. The protein is Small ribosomal subunit protein bS20 of Shewanella oneidensis (strain ATCC 700550 / JCM 31522 / CIP 106686 / LMG 19005 / NCIMB 14063 / MR-1).